Reading from the N-terminus, the 109-residue chain is Phosphoribosyl-AMP cyclohydrolase (109 aa).

Mg(2+) is bound at residue aspartate 76. Zn(2+) is bound at residue cysteine 77. Aspartate 78 and aspartate 80 together coordinate Mg(2+). 2 residues coordinate Zn(2+): cysteine 93 and cysteine 100.

The protein belongs to the PRA-CH family. In terms of assembly, homodimer. Mg(2+) serves as cofactor. The cofactor is Zn(2+).

It is found in the cytoplasm. It catalyses the reaction 1-(5-phospho-beta-D-ribosyl)-5'-AMP + H2O = 1-(5-phospho-beta-D-ribosyl)-5-[(5-phospho-beta-D-ribosylamino)methylideneamino]imidazole-4-carboxamide. It participates in amino-acid biosynthesis; L-histidine biosynthesis; L-histidine from 5-phospho-alpha-D-ribose 1-diphosphate: step 3/9. Functionally, catalyzes the hydrolysis of the adenine ring of phosphoribosyl-AMP. The sequence is that of Phosphoribosyl-AMP cyclohydrolase from Streptococcus mutans serotype c (strain ATCC 700610 / UA159).